The chain runs to 674 residues: Linear primary-alkylsulfatase (674 aa).

Residues 1-41 (MKLNALSTATHGSRSSPVKLWKFSTSFLLAASIIVSGQSWA) form the signal peptide. Zn(2+)-binding residues include H192, H194, D196, H197, E303, and E322. Residues 330 to 335 (NTYSLR) and R340 each bind sulfate. H367 is a binding site for Zn(2+). Y428 provides a ligand contact to sulfate.

The protein belongs to the metallo-beta-lactamase superfamily. Type III sulfatase family. As to quaternary structure, homodimer. The cofactor is Zn(2+).

The protein resides in the periplasm. It catalyses the reaction a primary linear alkyl sulfate ester + H2O = a primary alcohol + sulfate + H(+). With respect to regulation, inhibited by EDTA. Slightly activated in the presence of Ca(2+). Its function is as follows. Alkylsulfatase that cleaves primary alkyl sulfates such as sodium octyl sulfate and the widely used detergent sodium dodecyl sulfate (SDS). The sequence is that of Linear primary-alkylsulfatase from Pseudomonas sp.